Here is a 304-residue protein sequence, read N- to C-terminus: D-alanine--D-alanine ligase (304 aa).

Positions 103–299 constitute an ATP-grasp domain; the sequence is KLIWQALGLP…FADLCIEILK (197 aa). 129–184 contributes to the ATP binding site; sequence EEKLGLPMFVKPAAEGSSVGVVKVKGKGRLKSVYEELKHFQGEIIAERFIGGGEYS. Mg(2+) contacts are provided by aspartate 253, glutamate 266, and asparagine 268.

The protein belongs to the D-alanine--D-alanine ligase family. Requires Mg(2+) as cofactor. The cofactor is Mn(2+).

Its subcellular location is the cytoplasm. The enzyme catalyses 2 D-alanine + ATP = D-alanyl-D-alanine + ADP + phosphate + H(+). It participates in cell wall biogenesis; peptidoglycan biosynthesis. In terms of biological role, cell wall formation. In Neisseria meningitidis serogroup A / serotype 4A (strain DSM 15465 / Z2491), this protein is D-alanine--D-alanine ligase.